The following is a 352-amino-acid chain: Isoflavone-7-O-methyltransferase 6 (352 aa).

Residue 118–127 (VLDPTLSGSY) participates in substrate binding. Positions 196, 219, 239, 240, and 253 each coordinate S-adenosyl-L-methionine. The Proton acceptor role is filled by His257.

Belongs to the class I-like SAM-binding methyltransferase superfamily. Cation-independent O-methyltransferase family. COMT subfamily. As to quaternary structure, homodimer.

The catalysed reaction is a 7-hydroxyisoflavone + S-adenosyl-L-methionine = a 7-methoxyisoflavone + S-adenosyl-L-homocysteine + H(+). Its pathway is phytoalexin biosynthesis; medicarpin biosynthesis. In terms of biological role, transfers a methyl group to 7-hydroxyls of the isoflavones daidzein, genistein and 6,7,4'-trihydroxyisoflavone. Can also methylate (+)6a-hydroxymaackiain with lower efficiency. This Medicago sativa (Alfalfa) protein is Isoflavone-7-O-methyltransferase 6.